Reading from the N-terminus, the 133-residue chain is ATP synthase epsilon chain (133 aa).

This sequence belongs to the ATPase epsilon chain family. As to quaternary structure, F-type ATPases have 2 components, CF(1) - the catalytic core - and CF(0) - the membrane proton channel. CF(1) has five subunits: alpha(3), beta(3), gamma(1), delta(1), epsilon(1). CF(0) has three main subunits: a, b and c.

Its subcellular location is the cell membrane. Functionally, produces ATP from ADP in the presence of a proton gradient across the membrane. The protein is ATP synthase epsilon chain of Halalkalibacterium halodurans (strain ATCC BAA-125 / DSM 18197 / FERM 7344 / JCM 9153 / C-125) (Bacillus halodurans).